Consider the following 569-residue polypeptide: 2-isopropylmalate synthase (569 aa).

Positions P31–D305 constitute a Pyruvate carboxyltransferase domain. Residues D40, H244, H246, and N280 each coordinate Mg(2+). Residues R437–A569 are regulatory domain.

Belongs to the alpha-IPM synthase/homocitrate synthase family. LeuA type 2 subfamily. In terms of assembly, homodimer. Mg(2+) is required as a cofactor.

It is found in the cytoplasm. The catalysed reaction is 3-methyl-2-oxobutanoate + acetyl-CoA + H2O = (2S)-2-isopropylmalate + CoA + H(+). The protein operates within amino-acid biosynthesis; L-leucine biosynthesis; L-leucine from 3-methyl-2-oxobutanoate: step 1/4. In terms of biological role, catalyzes the condensation of the acetyl group of acetyl-CoA with 3-methyl-2-oxobutanoate (2-ketoisovalerate) to form 3-carboxy-3-hydroxy-4-methylpentanoate (2-isopropylmalate). This Cupriavidus taiwanensis (strain DSM 17343 / BCRC 17206 / CCUG 44338 / CIP 107171 / LMG 19424 / R1) (Ralstonia taiwanensis (strain LMG 19424)) protein is 2-isopropylmalate synthase.